The sequence spans 297 residues: Ubiquinol oxidase 2, mitochondrial (297 aa).

Positions 17-43 (VALNDKQHDKKVENGGAAASGGGDGGD) are disordered. A helical transmembrane segment spans residues 122–142 (AMMLETVAAVPGMVGGMLLHC). Residues glutamate 126, glutamate 165, and histidine 168 each coordinate Fe cation. The chain crosses the membrane as a helical span at residues 184 to 204 (ALVFAVQGVFINAYFVTYLLS). Fe cation-binding residues include glutamate 216, glutamate 267, and histidine 270.

Belongs to the alternative oxidase family. As to quaternary structure, homodimer; disulfide-linked. Fe cation serves as cofactor.

The protein localises to the mitochondrion inner membrane. It catalyses the reaction 2 a ubiquinol + O2 = 2 a ubiquinone + 2 H2O. In terms of biological role, catalyzes the cyanide-resistant oxidation of ubiquinol and the reduction of molecular oxygen to water, but does not translocate protons and consequently is not linked to oxidative phosphorylation. May increase respiration when the cytochrome respiratory pathway is restricted, or in response to low temperatures. This is Ubiquinol oxidase 2, mitochondrial (AOX2) from Nicotiana tabacum (Common tobacco).